Reading from the N-terminus, the 498-residue chain is Protein flp (498 aa).

A run of 4 helical transmembrane segments spans residues 6–26 (LYFLSISIIILVAISIAIHIT), 389–409 (FNIVTVLMTTLILLAFIFSAY), 433–453 (LTLCLCIAIALILYALPYLIL), and 471–491 (LALITTLIALFSTLIVILLFL).

It localises to the cell membrane. Its function is as follows. Its precise function is unknown. Has no penicillin-binding activity and is not involved in methicillin resistance. The chain is Protein flp (flp) from Staphylococcus aureus (strain MW2).